We begin with the raw amino-acid sequence, 284 residues long: NAD kinase (284 aa).

The active-site Proton acceptor is the aspartate 60. Residues 60–61, 134–135, arginine 145, lysine 162, aspartate 164, 175–180, and glutamine 234 each bind NAD(+); these read DG, NE, and TAYSFS.

It belongs to the NAD kinase family. It depends on a divalent metal cation as a cofactor.

Its subcellular location is the cytoplasm. The catalysed reaction is NAD(+) + ATP = ADP + NADP(+) + H(+). Functionally, involved in the regulation of the intracellular balance of NAD and NADP, and is a key enzyme in the biosynthesis of NADP. Catalyzes specifically the phosphorylation on 2'-hydroxyl of the adenosine moiety of NAD to yield NADP. The protein is NAD kinase of Clostridium botulinum (strain Eklund 17B / Type B).